Here is a 450-residue protein sequence, read N- to C-terminus: FAD-linked oxidoreductase ptmO (450 aa).

An FAD-binding PCMH-type domain is found at 32 to 203 (PPELPYAIVR…TRFFIRTRPA (172 aa)).

The protein belongs to the oxygen-dependent FAD-linked oxidoreductase family. Requires FAD as cofactor.

It functions in the pathway secondary metabolite biosynthesis. FAD-linked oxidoreductase; part of the gene cluster that mediates the biosynthesis of the indole diterpenes penitrems. The geranylgeranyl diphosphate (GGPP) synthase ptmG catalyzes the first step in penitrem biosynthesis via conversion of farnesyl pyrophosphate and isopentyl pyrophosphate into geranylgeranyl pyrophosphate (GGPP). Condensation of indole-3-glycerol phosphate with GGPP by the prenyl transferase ptmC then forms 3-geranylgeranylindole (3-GGI). Epoxidation by the FAD-dependent monooxygenase ptmM leads to a epoxidized-GGI that is substrate of the terpene cyclase ptmB for cyclization to yield paspaline. Paspaline is subsequently converted to 13-desoxypaxilline by the cytochrome P450 monooxygenase ptmP, the latter being then converted to paxilline by the cytochrome P450 monooxygenase ptmQ. Paxilline is converted to beta-paxitriol via C-10 ketoreduction by the short-chain dehydrogenase ptmH which can be monoprenylated at the C-20 by the indole diterpene prenyltransferase ptmD. A two-step elimination (acetylation and elimination) process performed by the O-acetyltransferase ptmV and ptmI leads to the production of the prenylated form of penijanthine. The FAD-linked oxidoreductase ptmO then converts the prenylated form of penijanthine into PC-M5 which is in turn transformed into PC-M4 by the aromatic dimethylallyltransferase ptmE. Five sequential oxidative transformations performed by the cytochrome P450 monooxygenases ptmK, ptmU, ptmL, ptmN and ptmJ yield the various penitrem compounds. PtmK, ptmU and ptmM are involved in the formation of the key bicyclic ring of penitrem C via the formation of the intermediates secopenitrem D and penitrem D. PtmL catalyzes the epoxidation of penitrem D and C to yield penitrem B and F, respectively. PtmJ catalyzes the last benzylic hydroxylation to convert penitrem B to prenitrem E and penitrem F to penitrem A. The polypeptide is FAD-linked oxidoreductase ptmO (Penicillium ochrochloron).